The chain runs to 97 residues: Peptide YY-A (97 aa).

The signal sequence occupies residues 1-28; it reads MAVMLKPWTVVATVLICVLLCLGTFVDA. Tyr64 bears the Tyrosine amide mark. A propeptide spans 68 to 97 (C-terminal extension); that stretch reads STSEDVMAELLFGDDTEHKQRSRYDDSFMW.

Belongs to the NPY family. As to expression, mainly expressed in brainstem neurons, and in the telencephalon. Also expressed in intestinal endocrine cells.

The protein localises to the secreted. The sequence is that of Peptide YY-A (pyya) from Danio rerio (Zebrafish).